We begin with the raw amino-acid sequence, 74 residues long: Turripeptide OL135 (74 aa).

The N-terminal stretch at 1–20 (MKVPIVLMLVLLLIMPLSDG) is a signal peptide. A propeptide spanning residues 21 to 28 (YERKRXXX) is cleaved from the precursor.

This sequence belongs to the conopeptide P-like superfamily. In terms of processing, contains 3 disulfide bonds. In terms of tissue distribution, expressed by the venom duct.

Its subcellular location is the secreted. In terms of biological role, acts as a neurotoxin by inhibiting an ion channel. This is Turripeptide OL135 from Iotyrris olangoensis (Sea snail).